Here is a 197-residue protein sequence, read N- to C-terminus: Imidazoleglycerol-phosphate dehydratase (197 aa).

This sequence belongs to the imidazoleglycerol-phosphate dehydratase family.

The protein localises to the cytoplasm. It carries out the reaction D-erythro-1-(imidazol-4-yl)glycerol 3-phosphate = 3-(imidazol-4-yl)-2-oxopropyl phosphate + H2O. The protein operates within amino-acid biosynthesis; L-histidine biosynthesis; L-histidine from 5-phospho-alpha-D-ribose 1-diphosphate: step 6/9. The protein is Imidazoleglycerol-phosphate dehydratase of Pseudomonas putida (strain W619).